The primary structure comprises 787 residues: Probable basic-leucine zipper transcription factor J (787 aa).

Residues 18-90 are compositionally biased toward low complexity; it reads NSNIHNNTHN…NNTQNTNNGT (73 aa). 6 disordered regions span residues 18–95, 153–173, 186–306, 343–372, 401–441, and 473–507; these read NSNI…LTPL, LNLS…NNNP, LQSQ…NNNT, DSLL…IQTS, LSSA…NNSN, and ASSE…DEDQ. Composition is skewed to low complexity over residues 186–223, 235–258, 273–305, and 351–366; these read LQSQ…SSPI, SSPI…STSP, NNNN…LNNN, and NNNN…NNNN. The span at 473-483 shows a compositional bias: low complexity; sequence ASSESAQSESS. One can recognise a bZIP domain in the interval 549 to 612; sequence ELKKQRRLVK…KALKKQLYSL (64 aa). The tract at residues 551–603 is basic motif; it reads KKQRRLVKNREYASQSRSRRKIYVENIETKLQKTNQDCASIKSQLNSVKEENK. Residues 605-612 form a leucine-zipper region; it reads LKKQLYSL. Disordered regions lie at residues 723–747 and 763–787; these read SNYI…VVST and DKEV…SPLN. Basic and acidic residues predominate over residues 763 to 778; that stretch reads DKEVPQKCKDSSDLKC.

The protein belongs to the bZIP family.

It localises to the nucleus. Its function is as follows. Probable transcriptional regulator. This chain is Probable basic-leucine zipper transcription factor J (bzpJ), found in Dictyostelium discoideum (Social amoeba).